We begin with the raw amino-acid sequence, 82 residues long: MVTIRLARHGAKKRPFYQIVVADSRNAATGRFIEKVGFFNPTAQGQEEGLRLDLDRVNHWVGQGASLSDRVAKLVKDAQKAA.

The protein belongs to the bacterial ribosomal protein bS16 family.

This chain is Small ribosomal subunit protein bS16, found in Vibrio campbellii (strain ATCC BAA-1116).